Consider the following 422-residue polypeptide: L-threonine dehydratase biosynthetic IlvA (422 aa).

At lysine 56 the chain carries N6-(pyridoxal phosphate)lysine. Residues asparagine 83, 189-193 (GGGGL), and serine 315 contribute to the pyridoxal 5'-phosphate site. The 75-residue stretch at 339–413 (HYFILNFPQR…FDPSNIYINE (75 aa)) folds into the ACT-like domain.

The protein belongs to the serine/threonine dehydratase family. In terms of assembly, homotetramer. Pyridoxal 5'-phosphate is required as a cofactor.

The catalysed reaction is L-threonine = 2-oxobutanoate + NH4(+). It functions in the pathway amino-acid biosynthesis; L-isoleucine biosynthesis; 2-oxobutanoate from L-threonine: step 1/1. Functionally, catalyzes the anaerobic formation of alpha-ketobutyrate and ammonia from threonine in a two-step reaction. The first step involved a dehydration of threonine and a production of enamine intermediates (aminocrotonate), which tautomerizes to its imine form (iminobutyrate). Both intermediates are unstable and short-lived. The second step is the nonenzymatic hydrolysis of the enamine/imine intermediates to form 2-ketobutyrate and free ammonia. In the low water environment of the cell, the second step is accelerated by RidA. The sequence is that of L-threonine dehydratase biosynthetic IlvA (ilvA) from Staphylococcus epidermidis (strain ATCC 12228 / FDA PCI 1200).